Here is a 455-residue protein sequence, read N- to C-terminus: 1,4-beta-D-glucan cellobiohydrolase C (455 aa).

The first 19 residues, 1 to 19 (MHYSASGLALAFLLPAIQA), serve as a signal peptide directing secretion. The region spanning 20–55 (QQTLYGQCGGSGWTGATSCVAGAACSTLNQWYAQCL) is the CBM1 domain. 2 cysteine pairs are disulfide-bonded: Cys27-Cys44 and Cys38-Cys54. The thr-rich linker stretch occupies residues 59-92 (TTTSTTLTTTTSSVTTTSNPGSTTTTSSVTVTAT). The interval 66–86 (TTTTSSVTTTSNPGSTTTTSS) is disordered. Residues 93 to 450 (ASGNPFSGYQ…QAYFVQLLQN (358 aa)) form a catalytic region. The active site involves Asp185. Disulfide bonds link Cys186–Cys245 and Cys377–Cys424. Asp231 acts as the Proton donor in catalysis. Asp410 serves as the catalytic Nucleophile.

It belongs to the glycosyl hydrolase 6 (cellulase B) family.

It is found in the secreted. The enzyme catalyses Hydrolysis of (1-&gt;4)-beta-D-glucosidic linkages in cellulose and cellotetraose, releasing cellobiose from the non-reducing ends of the chains.. The biological conversion of cellulose to glucose generally requires three types of hydrolytic enzymes: (1) Endoglucanases which cut internal beta-1,4-glucosidic bonds; (2) Exocellobiohydrolases that cut the disaccharide cellobiose from the non-reducing end of the cellulose polymer chain; (3) Beta-1,4-glucosidases which hydrolyze the cellobiose and other short cello-oligosaccharides to glucose. Active against carboxymethylcellulose, beta-glucan and lichenan. The protein is 1,4-beta-D-glucan cellobiohydrolase C (cbhC) of Emericella nidulans (strain FGSC A4 / ATCC 38163 / CBS 112.46 / NRRL 194 / M139) (Aspergillus nidulans).